Consider the following 159-residue polypeptide: Phosphopantetheine adenylyltransferase (159 aa).

Substrate is bound at residue Thr-9. Residues 9–10 and His-17 each bind ATP; that span reads TF. Substrate is bound by residues Lys-41, Leu-73, and Arg-87. ATP-binding positions include 88–90, Glu-98, and 123–129; these read GLR and YSFISST.

Belongs to the bacterial CoaD family. As to quaternary structure, homohexamer. Requires Mg(2+) as cofactor.

It is found in the cytoplasm. The enzyme catalyses (R)-4'-phosphopantetheine + ATP + H(+) = 3'-dephospho-CoA + diphosphate. The protein operates within cofactor biosynthesis; coenzyme A biosynthesis; CoA from (R)-pantothenate: step 4/5. Functionally, reversibly transfers an adenylyl group from ATP to 4'-phosphopantetheine, yielding dephospho-CoA (dPCoA) and pyrophosphate. This chain is Phosphopantetheine adenylyltransferase, found in Pseudomonas putida (strain GB-1).